Here is an 88-residue protein sequence, read N- to C-terminus: DNA-directed RNA polymerase subunit omega (88 aa).

It belongs to the RNA polymerase subunit omega family. In terms of assembly, the RNAP catalytic core consists of 2 alpha, 1 beta, 1 beta' and 1 omega subunit. When a sigma factor is associated with the core the holoenzyme is formed, which can initiate transcription.

The catalysed reaction is RNA(n) + a ribonucleoside 5'-triphosphate = RNA(n+1) + diphosphate. Functionally, promotes RNA polymerase assembly. Latches the N- and C-terminal regions of the beta' subunit thereby facilitating its interaction with the beta and alpha subunits. The sequence is that of DNA-directed RNA polymerase subunit omega from Haemophilus influenzae (strain PittEE).